Reading from the N-terminus, the 159-residue chain is Transcriptional repressor NrdR (159 aa).

Residues 3–34 fold into a zinc finger; that stretch reads CPFCRHDDTQVVDSRVSEDGAAIRRRRRCSAC. The ATP-cone domain maps to 49 to 139; it reads PAVVKKDGSR…VYRRFEDVSE (91 aa).

It belongs to the NrdR family. Zn(2+) is required as a cofactor.

Negatively regulates transcription of bacterial ribonucleotide reductase nrd genes and operons by binding to NrdR-boxes. This Burkholderia pseudomallei (strain 1106a) protein is Transcriptional repressor NrdR.